The primary structure comprises 167 residues: NADH-ubiquinone oxidoreductase chain 6 (167 aa).

Helical transmembrane passes span 24–44 (PYFG…IILA), 54–74 (LLLI…ALVL), 85–105 (VLMK…GGYL), and 135–155 (WLLI…ILEI).

This sequence belongs to the complex I subunit 6 family.

It localises to the mitochondrion membrane. The enzyme catalyses a ubiquinone + NADH + 5 H(+)(in) = a ubiquinol + NAD(+) + 4 H(+)(out). Core subunit of the mitochondrial membrane respiratory chain NADH dehydrogenase (Complex I) that is believed to belong to the minimal assembly required for catalysis. Complex I functions in the transfer of electrons from NADH to the respiratory chain. The immediate electron acceptor for the enzyme is believed to be ubiquinone. The sequence is that of NADH-ubiquinone oxidoreductase chain 6 (MT-ND6) from Myxine glutinosa (Atlantic hagfish).